The primary structure comprises 227 residues: C4-dicarboxylate TRAP transporter small permease protein DctQ (227 aa).

The Cytoplasmic portion of the chain corresponds to 1-7 (MLRILDR). A helical membrane pass occupies residues 8–28 (AEEVLIAALIATATVLIFVSV). Topologically, residues 29 to 67 (THRFTLGFVADFVGFFRGHGMTGAAAAAKSLYTTLRGIN) are periplasmic. Residues 68 to 88 (LVWAQELCIILFVWMAKFGAA) traverse the membrane as a helical segment. At 89 to 112 (YGVRTGIHVGIDVLINRLDAPKRR) the chain is on the cytoplasmic side. The chain crosses the membrane as a helical span at residues 113-133 (FFILLGLGAGALFTGIIATLG). The Periplasmic segment spans residues 134–149 (ANFVLHMYHASSTSPD). The chain crosses the membrane as a helical span at residues 150–170 (LELPMWLVYLAIPMGSSLMCF). Residues 171–227 (RFLQVAFGFARTGELPHHDHGHVDGVDTENEGIDAEGDVLLHSPLTPRDLVEKPKDN) are Cytoplasmic-facing.

The protein belongs to the TRAP transporter small permease family. The complex comprises the extracytoplasmic solute receptor protein DctP, and the two transmembrane proteins DctQ and DctM.

The protein localises to the cell inner membrane. Its function is as follows. Part of the tripartite ATP-independent periplasmic (TRAP) transport system DctPQM involved in C4-dicarboxylates uptake. The polypeptide is C4-dicarboxylate TRAP transporter small permease protein DctQ (Rhodobacter capsulatus (Rhodopseudomonas capsulata)).